Here is a 216-residue protein sequence, read N- to C-terminus: Refilin-A (216 aa).

The tract at residues 1 to 83 is disordered; that stretch reads MVGHLHLQGM…LPNPPASEMR (83 aa). Residues 12–22 show a composition bias toward basic and acidic residues; that stretch reads DSLKEQGREGL. Pro residues predominate over residues 29 to 39; that stretch reads GLPPSPSPSPP. Residues 57-71 show a composition bias toward low complexity; the sequence is ASSEPPGPSEARAPP. R163 carries the post-translational modification Asymmetric dimethylarginine.

This sequence belongs to the Refilin family. As to quaternary structure, interacts with FLNA and FLNB.

Its subcellular location is the cytoplasm. The protein resides in the cytoskeleton. In terms of biological role, involved in the regulation of the perinuclear actin network and nuclear shape through interaction with filamins. Plays an essential role in actin cytoskeleton formation in developing cartilaginous cells. This chain is Refilin-A, found in Homo sapiens (Human).